The following is an 86-amino-acid chain: Hepcidin-1 (86 aa).

Residues 1–22 form the signal peptide; sequence MKAFSVAVVLVIACMFILESTA. A propeptide spanning residues 23 to 59 is cleaved from the precursor; sequence VPFSEVRTEEVGSFDSPVGEHQQPGGESMHLPEPFRF. Cystine bridges form between Cys-68/Cys-84, Cys-71/Cys-74, Cys-72/Cys-80, and Cys-75/Cys-83.

This sequence belongs to the hepcidin family.

Its subcellular location is the secreted. In terms of biological role, seems to act as a signaling molecule involved in the maintenance of iron homeostasis. Seems to be required in conjunction with HFE to regulate both intestinal iron absorption and iron storage in macrophages. May also have antimicrobial activity. In Salmo salar (Atlantic salmon), this protein is Hepcidin-1 (hamp1).